The sequence spans 102 residues: Large ribosomal subunit protein uL24 (102 aa).

This sequence belongs to the universal ribosomal protein uL24 family. As to quaternary structure, part of the 50S ribosomal subunit.

One of two assembly initiator proteins, it binds directly to the 5'-end of the 23S rRNA, where it nucleates assembly of the 50S subunit. In terms of biological role, one of the proteins that surrounds the polypeptide exit tunnel on the outside of the subunit. The chain is Large ribosomal subunit protein uL24 from Allorhizobium ampelinum (strain ATCC BAA-846 / DSM 112012 / S4) (Agrobacterium vitis (strain S4)).